The chain runs to 529 residues: Arginine--tRNA ligase (529 aa).

Positions 113 to 123 match the 'HIGH' region motif; it reads ANPTGPLHIGH.

It belongs to the class-I aminoacyl-tRNA synthetase family. As to quaternary structure, monomer.

It localises to the cytoplasm. It catalyses the reaction tRNA(Arg) + L-arginine + ATP = L-arginyl-tRNA(Arg) + AMP + diphosphate. The protein is Arginine--tRNA ligase of Aliarcobacter butzleri (strain RM4018) (Arcobacter butzleri).